A 481-amino-acid chain; its full sequence is Glutamate--tRNA ligase (481 aa).

Positions 11–21 match the 'HIGH' region motif; it reads PSPTGLLHIGN. Positions 255-259 match the 'KMSKS' region motif; that stretch reads KLSKR. Lys-258 contributes to the ATP binding site.

Belongs to the class-I aminoacyl-tRNA synthetase family. Glutamate--tRNA ligase type 1 subfamily. Monomer.

Its subcellular location is the cytoplasm. It catalyses the reaction tRNA(Glu) + L-glutamate + ATP = L-glutamyl-tRNA(Glu) + AMP + diphosphate. In terms of biological role, catalyzes the attachment of glutamate to tRNA(Glu) in a two-step reaction: glutamate is first activated by ATP to form Glu-AMP and then transferred to the acceptor end of tRNA(Glu). The polypeptide is Glutamate--tRNA ligase (Streptococcus pyogenes serotype M4 (strain MGAS10750)).